A 429-amino-acid chain; its full sequence is tRNA(Ile2) 2-agmatinylcytidine synthetase TiaS (429 aa).

A DNA-binding region (OB) is located at residues Val271–Pro343.

The protein belongs to the TiaS family.

Its subcellular location is the cytoplasm. The enzyme catalyses cytidine(34) in tRNA(Ile2) + agmatine + ATP + H2O = 2-agmatinylcytidine(34) in tRNA(Ile2) + AMP + 2 phosphate + 2 H(+). Functionally, ATP-dependent agmatine transferase that catalyzes the formation of 2-agmatinylcytidine (agm2C) at the wobble position (C34) of tRNA(Ile2), converting the codon specificity from AUG to AUA. The sequence is that of tRNA(Ile2) 2-agmatinylcytidine synthetase TiaS from Thermococcus sibiricus (strain DSM 12597 / MM 739).